Here is a 561-residue protein sequence, read N- to C-terminus: Putative transport protein YbjL (561 aa).

A run of 5 helical transmembrane segments spans residues 8-28 (LLNG…LCLG), 32-52 (LGSI…LLGQ), 66-86 (FMLF…SIFF), 94-114 (MLAL…GKLF), and 158-178 (NLSL…IVGA). 2 consecutive RCK C-terminal domains span residues 200 to 288 (RGLD…SFRN) and 292 to 373 (VFDR…RIGF). 5 consecutive transmembrane segments (helical) span residues 383 to 403 (LLAF…TFQF), 406 to 426 (FSFG…LGFL), 447 to 467 (FGLM…ISNG), 475 to 495 (MLIA…LFGA), and 540 to 560 (AIAN…WPGL).

Belongs to the AAE transporter (TC 2.A.81) family. YbjL subfamily.

It is found in the cell membrane. The polypeptide is Putative transport protein YbjL (Salmonella arizonae (strain ATCC BAA-731 / CDC346-86 / RSK2980)).